The chain runs to 76 residues: UPF0346 protein LBA0976 (76 aa).

It belongs to the UPF0346 family.

The sequence is that of UPF0346 protein LBA0976 from Lactobacillus acidophilus (strain ATCC 700396 / NCK56 / N2 / NCFM).